The primary structure comprises 425 residues: Histidine--tRNA ligase 1 (425 aa).

Belongs to the class-II aminoacyl-tRNA synthetase family. In terms of assembly, homodimer.

It is found in the cytoplasm. The catalysed reaction is tRNA(His) + L-histidine + ATP = L-histidyl-tRNA(His) + AMP + diphosphate + H(+). The polypeptide is Histidine--tRNA ligase 1 (Bacillus thuringiensis subsp. konkukian (strain 97-27)).